Here is a 122-residue protein sequence, read N- to C-terminus: Large ribosomal subunit protein uL18 (122 aa).

Belongs to the universal ribosomal protein uL18 family. As to quaternary structure, part of the 50S ribosomal subunit; part of the 5S rRNA/L5/L18/L25 subcomplex. Contacts the 5S and 23S rRNAs.

This is one of the proteins that bind and probably mediate the attachment of the 5S RNA into the large ribosomal subunit, where it forms part of the central protuberance. This Buchnera aphidicola subsp. Acyrthosiphon pisum (strain 5A) protein is Large ribosomal subunit protein uL18.